The sequence spans 408 residues: Elongation factor Tu (408 aa).

Residues 10 to 219 (KTHVNVGTIG…ALDTYIPDPV (210 aa)) enclose the tr-type G domain. GTP-binding positions include 19 to 26 (GHVDHGKT), 88 to 92 (DCPGH), and 143 to 146 (NKCD). Thr-26 contributes to the Mg(2+) binding site.

The protein belongs to the TRAFAC class translation factor GTPase superfamily. Classic translation factor GTPase family. EF-Tu/EF-1A subfamily. Monomer.

It localises to the cytoplasm. The enzyme catalyses GTP + H2O = GDP + phosphate + H(+). GTP hydrolase that promotes the GTP-dependent binding of aminoacyl-tRNA to the A-site of ribosomes during protein biosynthesis. This is Elongation factor Tu from Brachyspira hyodysenteriae (strain ATCC 49526 / WA1).